A 257-amino-acid chain; its full sequence is tRNA-cytidine(32) 2-sulfurtransferase (257 aa).

A PP-loop motif motif is present at residues 37 to 42 (SGGKDS). [4Fe-4S] cluster-binding residues include Cys-112, Cys-115, and Cys-202.

This sequence belongs to the TtcA family. In terms of assembly, homodimer. Requires Mg(2+) as cofactor. [4Fe-4S] cluster is required as a cofactor.

It localises to the cytoplasm. It carries out the reaction cytidine(32) in tRNA + S-sulfanyl-L-cysteinyl-[cysteine desulfurase] + AH2 + ATP = 2-thiocytidine(32) in tRNA + L-cysteinyl-[cysteine desulfurase] + A + AMP + diphosphate + H(+). The protein operates within tRNA modification. Its function is as follows. Catalyzes the ATP-dependent 2-thiolation of cytidine in position 32 of tRNA, to form 2-thiocytidine (s(2)C32). The sulfur atoms are provided by the cysteine/cysteine desulfurase (IscS) system. This Geobacter sulfurreducens (strain ATCC 51573 / DSM 12127 / PCA) protein is tRNA-cytidine(32) 2-sulfurtransferase.